The primary structure comprises 730 residues: 1,4-alpha-glucan branching enzyme GlgB (730 aa).

Asp-405 functions as the Nucleophile in the catalytic mechanism. Catalysis depends on Glu-458, which acts as the Proton donor.

This sequence belongs to the glycosyl hydrolase 13 family. GlgB subfamily. Monomer.

It catalyses the reaction Transfers a segment of a (1-&gt;4)-alpha-D-glucan chain to a primary hydroxy group in a similar glucan chain.. The protein operates within glycan biosynthesis; glycogen biosynthesis. Functionally, catalyzes the formation of the alpha-1,6-glucosidic linkages in glycogen by scission of a 1,4-alpha-linked oligosaccharide from growing alpha-1,4-glucan chains and the subsequent attachment of the oligosaccharide to the alpha-1,6 position. This is 1,4-alpha-glucan branching enzyme GlgB from Haemophilus influenzae (strain 86-028NP).